A 230-amino-acid polypeptide reads, in one-letter code: Ribonuclease HII (230 aa).

One can recognise an RNase H type-2 domain in the interval 28–217 (FRIAGIDEAG…VKEHLPSQPD (190 aa)). The a divalent metal cation site is built by Asp34, Glu35, and Asp126. The tract at residues 211 to 230 (HLPSQPDCDTAGPSTGLFSF) is disordered.

It belongs to the RNase HII family. The cofactor is Mn(2+). Mg(2+) serves as cofactor.

The protein localises to the cytoplasm. The enzyme catalyses Endonucleolytic cleavage to 5'-phosphomonoester.. In terms of biological role, endonuclease that specifically degrades the RNA of RNA-DNA hybrids. The sequence is that of Ribonuclease HII from Geobacter sp. (strain M21).